The following is a 225-amino-acid chain: Insulin-induced gene 2 protein (225 aa).

Over 1-28 (MAEGETESPGPKKCGPYISSVTSQSVNL) the chain is Cytoplasmic. The helical transmembrane segment at 29 to 51 (MIRGVVLFFIGVFLALVLNLLQI) threads the bilayer. Over 52–70 (QRNVTLFPPDVIASIFSSA) the chain is Lumenal. The chain crosses the membrane as a helical span at residues 71–88 (WWVPPCCGTASAVIGLLY). At 89 to 103 (PCIDRHLGEPHKFKR) the chain is on the cytoplasmic side. A helical membrane pass occupies residues 104-126 (EWSSVMRCVAVFVGINHASAKVD). The Lumenal segment spans residues 127–129 (FDN). Residues 130–148 (NIQLSLTLAALSIGLWWTF) traverse the membrane as a helical segment. Topologically, residues 149 to 153 (DRSRS) are cytoplasmic. Ser-151 is modified (phosphoserine; by PCK1). A helical membrane pass occupies residues 154-175 (GFGLGVGIAFLATVVTQLLVYN). Residues 176-189 (GVYQYTSPDFLYVR) are Lumenal-facing. The helical transmembrane segment at 190-207 (SWLPCIFFAGGITMGNIG) threads the bilayer. The Cytoplasmic portion of the chain corresponds to 208–225 (RQLAMYECKVIAEKSHQE). Cys-215 carries the cysteine sulfenic acid (-SOH); alternate modification. Residue Cys-215 forms a Glycyl cysteine thioester (Cys-Gly) (interchain with G-Cter in ubiquitin); alternate linkage. Residues 219–225 (AEKSHQE) carry the KxHxx motif.

Belongs to the INSIG family. As to quaternary structure, interacts with SCAP; interaction is direct and only takes place in the presence of sterols; it prevents interaction between SCAP and the coat protein complex II (COPII). Associates with the SCAP-SREBP complex (composed of SCAP and SREBF1/SREBP1 or SREBF2/SREBP2); association is mediated via its interaction with SCAP and only takes place in the presence of sterols. Interacts with RNF139. Interacts with RNF145. Post-translationally, phosphorylation at Ser-151 by PCK1 reduces binding to oxysterol, disrupting the interaction between INSIG2 and SCAP, thereby promoting nuclear translocation of SREBP proteins (SREBF1/SREBP1 or SREBF2/SREBP2) and subsequent transcription of downstream lipogenesis-related genes. In terms of processing, polyubiquitinated by AMFR/gp78 at Cys-215 in some tissues such as adipose tissues, undifferentiated myoblasts and liver, leading to its degradation. In differentiated myotubes, Cys-215 oxidation prevents ubiquitination at the same site, resulting in protein stabilization. Oxidized at Cys-215 in differentiated myotubes, preventing ubiquitination at the same site, and resulting in protein stabilization.

The protein resides in the endoplasmic reticulum membrane. In terms of biological role, oxysterol-binding protein that mediates feedback control of cholesterol synthesis by controlling both endoplasmic reticulum to Golgi transport of SCAP and degradation of HMGCR. Acts as a negative regulator of cholesterol biosynthesis by mediating the retention of the SCAP-SREBP complex in the endoplasmic reticulum, thereby blocking the processing of sterol regulatory element-binding proteins (SREBPs) SREBF1/SREBP1 and SREBF2/SREBP2. Binds oxysterol, including 22-hydroxycholesterol, 24-hydroxycholesterol, 25-hydroxycholesterol and 27-hydroxycholesterol, regulating interaction with SCAP and retention of the SCAP-SREBP complex in the endoplasmic reticulum. In presence of oxysterol, interacts with SCAP, retaining the SCAP-SREBP complex in the endoplasmic reticulum, thereby preventing SCAP from escorting SREBF1/SREBP1 and SREBF2/SREBP2 to the Golgi. Sterol deprivation or phosphorylation by PCK1 reduce oxysterol-binding, disrupting the interaction between INSIG2 and SCAP, thereby promoting Golgi transport of the SCAP-SREBP complex, followed by processing and nuclear translocation of SREBF1/SREBP1 and SREBF2/SREBP2. Also regulates cholesterol synthesis by regulating degradation of HMGCR: initiates the sterol-mediated ubiquitin-mediated endoplasmic reticulum-associated degradation (ERAD) of HMGCR via recruitment of the reductase to the ubiquitin ligase RNF139. This Homo sapiens (Human) protein is Insulin-induced gene 2 protein.